The chain runs to 204 residues: Dual-action ribosomal maturation protein DarP (204 aa).

2 disordered regions span residues 1 to 31 (MPPM…SKSQ) and 182 to 204 (GGAS…DDEA). Residues 186-204 (DSDDEAADDAGDDHDDDEA) show a composition bias toward acidic residues.

Belongs to the DarP family.

It is found in the cytoplasm. Its function is as follows. Member of a network of 50S ribosomal subunit biogenesis factors which assembles along the 30S-50S interface, preventing incorrect 23S rRNA structures from forming. Promotes peptidyl transferase center (PTC) maturation. This chain is Dual-action ribosomal maturation protein DarP, found in Burkholderia orbicola (strain MC0-3).